The primary structure comprises 594 residues: UvrABC system protein C (594 aa).

A GIY-YIG domain is found at 17–94; the sequence is LEPGCYLMKD…IKQYQPRYNI (78 aa). The UVR domain occupies 199 to 234; it reads KTILNHLEERMNKASEQLDFEQAKEYRDMIQHIHNL.

This sequence belongs to the UvrC family. Interacts with UvrB in an incision complex.

Its subcellular location is the cytoplasm. Its function is as follows. The UvrABC repair system catalyzes the recognition and processing of DNA lesions. UvrC both incises the 5' and 3' sides of the lesion. The N-terminal half is responsible for the 3' incision and the C-terminal half is responsible for the 5' incision. The sequence is that of UvrABC system protein C from Staphylococcus epidermidis (strain ATCC 35984 / DSM 28319 / BCRC 17069 / CCUG 31568 / BM 3577 / RP62A).